A 329-amino-acid polypeptide reads, in one-letter code: Malate dehydrogenase (329 aa).

Position 12–18 (12–18 (GAAGQIG)) interacts with NAD(+). Positions 93 and 99 each coordinate substrate. NAD(+) contacts are provided by residues Asn106, Gln113, and 130–132 (VGN). Positions 132 and 163 each coordinate substrate. His188 serves as the catalytic Proton acceptor.

The protein belongs to the LDH/MDH superfamily. MDH type 2 family.

It carries out the reaction (S)-malate + NAD(+) = oxaloacetate + NADH + H(+). With respect to regulation, strongly inhibited by Hg(2+) and Zn(2+). Activated by Na(+), NH(4)(+), Ca(2+), Cu(2+) and Mg(2+). In terms of biological role, catalyzes the reversible oxidation of malate to oxaloacetate. Exhibits remarkably higher catalytic efficiency for oxaloacetate reduction than for malate oxidation in vitro. Highly specific for NAD(H). Can also use NADPH for oxaloacetate reduction, but catalytic efficiency is 97-fold higher with NADH. No activity detected with NADP(+) and malate. The chain is Malate dehydrogenase from Streptomyces avermitilis (strain ATCC 31267 / DSM 46492 / JCM 5070 / NBRC 14893 / NCIMB 12804 / NRRL 8165 / MA-4680).